Consider the following 53-residue polypeptide: Large ribosomal subunit protein eL40 (53 aa).

Belongs to the eukaryotic ribosomal protein eL40 family.

The sequence is that of Large ribosomal subunit protein eL40 from Pyrobaculum calidifontis (strain DSM 21063 / JCM 11548 / VA1).